The chain runs to 345 residues: Isopentenyl-diphosphate delta-isomerase (345 aa).

6–7 provides a ligand contact to substrate; sequence RK. FMN-binding positions include 63 to 65, Ser93, and Asn122; that span reads SMT. Position 93 to 95 (93 to 95) interacts with substrate; the sequence is SQR. A substrate-binding site is contributed by Gln156. Residue Glu157 participates in Mg(2+) binding. Residues Lys188, Thr218, 265-267, and 286-287 each bind FMN; these read GLR and AL.

It belongs to the IPP isomerase type 2 family. Homooctamer. Dimer of tetramers. Requires FMN as cofactor. NADPH serves as cofactor. It depends on Mg(2+) as a cofactor.

It localises to the cytoplasm. It carries out the reaction isopentenyl diphosphate = dimethylallyl diphosphate. Functionally, involved in the biosynthesis of isoprenoids. Catalyzes the 1,3-allylic rearrangement of the homoallylic substrate isopentenyl (IPP) to its allylic isomer, dimethylallyl diphosphate (DMAPP). The protein is Isopentenyl-diphosphate delta-isomerase of Archaeoglobus fulgidus (strain ATCC 49558 / DSM 4304 / JCM 9628 / NBRC 100126 / VC-16).